Reading from the N-terminus, the 287-residue chain is MVYTTRQIGAKNTLDYKVFIEEDGKPVSPFHDIPLYADKEENIFNMVVEIPRWTNAKLEITKEETLNPIIQDTKKGKLRYVRNCFPHHGYIHNYGAFPQTWEDPNQTHPETKAVGDNDPVDVLEIGETIGYTGQVKQVKVLGIMALLDEGETDWKVIAIDINDPLAPKLNDIEDVEKYFPGLLRATNEWFRIYKIPDGKPENQFAFSGEAKNKKYALDIIKETNESWKQLIAGKSTDSKDIALENTKVTDSPYYSASAASAIPAAAPQADAPIDKSVDKWFFISGSA.

Diphosphate is bound at residue Arg79. Mg(2+) contacts are provided by Asp116, Asp121, and Asp153.

This sequence belongs to the PPase family. Mg(2+) serves as cofactor.

The protein resides in the cytoplasm. The catalysed reaction is diphosphate + H2O = 2 phosphate + H(+). This Candida glabrata (strain ATCC 2001 / BCRC 20586 / JCM 3761 / NBRC 0622 / NRRL Y-65 / CBS 138) (Yeast) protein is Inorganic pyrophosphatase (IPP1).